The primary structure comprises 516 residues: Maturase K (516 aa).

Belongs to the intron maturase 2 family. MatK subfamily.

It localises to the plastid. The protein resides in the chloroplast. Functionally, usually encoded in the trnK tRNA gene intron. Probably assists in splicing its own and other chloroplast group II introns. The protein is Maturase K of Galanthus nivalis (Common snowdrop).